The sequence spans 683 residues: DNA ligase (683 aa).

Residues 44 to 48 (DAEYD), 93 to 94 (SL), and glutamate 127 contribute to the NAD(+) site. Lysine 129 serves as the catalytic N6-AMP-lysine intermediate. NAD(+) is bound by residues arginine 150, glutamate 187, lysine 302, and lysine 326. Positions 420, 423, 438, and 444 each coordinate Zn(2+). A BRCT domain is found at 601–683 (RVGGRLAGLT…SKLLATGGNQ (83 aa)).

This sequence belongs to the NAD-dependent DNA ligase family. LigA subfamily. Requires Mg(2+) as cofactor. Mn(2+) is required as a cofactor.

It carries out the reaction NAD(+) + (deoxyribonucleotide)n-3'-hydroxyl + 5'-phospho-(deoxyribonucleotide)m = (deoxyribonucleotide)n+m + AMP + beta-nicotinamide D-nucleotide.. DNA ligase that catalyzes the formation of phosphodiester linkages between 5'-phosphoryl and 3'-hydroxyl groups in double-stranded DNA using NAD as a coenzyme and as the energy source for the reaction. It is essential for DNA replication and repair of damaged DNA. This chain is DNA ligase, found in Trichlorobacter lovleyi (strain ATCC BAA-1151 / DSM 17278 / SZ) (Geobacter lovleyi).